We begin with the raw amino-acid sequence, 181 residues long: Adenylate kinase (181 aa).

10-15 (GAGKGT) contacts ATP. The interval 30-59 (STGDLFRANIGEGTPLGKEAKSYIDAGKLV) is NMP. AMP contacts are provided by residues Thr31, Arg36, 57-59 (KLV), 85-88 (GFPR), and Gln92. The segment at 126 to 132 (ARGRADD) is LID. Arg127 is an ATP binding site. AMP is bound by residues Arg129 and Arg140. Gly166 is an ATP binding site.

It belongs to the adenylate kinase family. As to quaternary structure, monomer.

It is found in the cytoplasm. The enzyme catalyses AMP + ATP = 2 ADP. It functions in the pathway purine metabolism; AMP biosynthesis via salvage pathway; AMP from ADP: step 1/1. Its function is as follows. Catalyzes the reversible transfer of the terminal phosphate group between ATP and AMP. Plays an important role in cellular energy homeostasis and in adenine nucleotide metabolism. The sequence is that of Adenylate kinase from Corynebacterium diphtheriae (strain ATCC 700971 / NCTC 13129 / Biotype gravis).